A 518-amino-acid chain; its full sequence is Membrane-bound lytic murein transglycosylase F (518 aa).

The first 21 residues, 1–21 (MKKLKINYLFIGILALLLAVA), serve as a signal peptide directing secretion. Positions 22 to 269 (LWPSIPWFGK…RIEEKYLGHG (248 aa)) are non-LT domain. The LT domain stretch occupies residues 270–518 (DDFDYVDTRT…SRKGSEEKQN (249 aa)). The active site involves glutamate 314.

This sequence in the N-terminal section; belongs to the bacterial solute-binding protein 3 family. In the C-terminal section; belongs to the transglycosylase Slt family.

The protein resides in the cell outer membrane. It catalyses the reaction Exolytic cleavage of the (1-&gt;4)-beta-glycosidic linkage between N-acetylmuramic acid (MurNAc) and N-acetylglucosamine (GlcNAc) residues in peptidoglycan, from either the reducing or the non-reducing ends of the peptidoglycan chains, with concomitant formation of a 1,6-anhydrobond in the MurNAc residue.. Its function is as follows. Murein-degrading enzyme that degrades murein glycan strands and insoluble, high-molecular weight murein sacculi, with the concomitant formation of a 1,6-anhydromuramoyl product. Lytic transglycosylases (LTs) play an integral role in the metabolism of the peptidoglycan (PG) sacculus. Their lytic action creates space within the PG sacculus to allow for its expansion as well as for the insertion of various structures such as secretion systems and flagella. The chain is Membrane-bound lytic murein transglycosylase F from Shigella dysenteriae serotype 1 (strain Sd197).